Consider the following 138-residue polypeptide: MQPIIKGAVSSTFKRALYNFGIKEKKSVNIEMGRTQQTKKIDQSLSKKLPKGTIYDPFDFSMGRIHLDRKYQANKNSNRNDIMKSGANPLEFYARPRILSRYVTSTGRIQHRDITGLSAKNQRRLSKAIRRCQAIGLM.

This sequence belongs to the bacterial ribosomal protein bS18 family. In terms of assembly, component of the mitochondrial small ribosomal subunit. Mature mitochondrial ribosomes consist of a small (37S) and a large (54S) subunit. The 37S subunit contains at least 33 different proteins and 1 molecule of RNA (15S). The 54S subunit contains at least 45 different proteins and 1 molecule of RNA (21S).

It is found in the mitochondrion. The sequence is that of Small ribosomal subunit protein bS18m (RSM18) from Saccharomyces cerevisiae (strain RM11-1a) (Baker's yeast).